A 261-amino-acid chain; its full sequence is Homeobox-leucine zipper protein HOX24 (261 aa).

Disordered regions lie at residues alanine 42–arginine 67 and lysine 160–methionine 188. Positions glycine 46–glycine 61 are enriched in gly residues. Residues glycine 61–glutamine 121 constitute a DNA-binding region (homeobox). The segment at lysine 120–arginine 164 is leucine-zipper.

Belongs to the HD-ZIP homeobox family. Class I subfamily. Expressed in roots and panicles.

It is found in the nucleus. Its function is as follows. Probable transcription factor. The polypeptide is Homeobox-leucine zipper protein HOX24 (HOX24) (Oryza sativa subsp. japonica (Rice)).